The primary structure comprises 144 residues: 3-hydroxyacyl-[acyl-carrier-protein] dehydratase FabZ (144 aa).

His48 is an active-site residue.

It belongs to the thioester dehydratase family. FabZ subfamily.

Its subcellular location is the cytoplasm. The enzyme catalyses a (3R)-hydroxyacyl-[ACP] = a (2E)-enoyl-[ACP] + H2O. Functionally, involved in unsaturated fatty acids biosynthesis. Catalyzes the dehydration of short chain beta-hydroxyacyl-ACPs and long chain saturated and unsaturated beta-hydroxyacyl-ACPs. The protein is 3-hydroxyacyl-[acyl-carrier-protein] dehydratase FabZ of Bacillus pumilus (strain SAFR-032).